A 102-amino-acid chain; its full sequence is Small ribosomal subunit protein uS10 (102 aa).

The protein belongs to the universal ribosomal protein uS10 family. As to quaternary structure, part of the 30S ribosomal subunit.

In terms of biological role, involved in the binding of tRNA to the ribosomes. The chain is Small ribosomal subunit protein uS10 from Dehalococcoides mccartyi (strain ATCC BAA-2266 / KCTC 15142 / 195) (Dehalococcoides ethenogenes (strain 195)).